The primary structure comprises 482 residues: MKFIIKLFPEITIKSQSVRLRFIKILTGNIRNVLKHYDETLAVVRHWDNIEVRAKDENQRLAIRDALTRIPGIHHILEVEDVPFTDMHDIFEKALAQYREQLEGKTFCVRVKRRGKHEFSSIEVERYVGGGLNQHIESARVKLTNPDVTVHLEVEDDRLLLIKGRYEGIGGFPIGTQEDVLSLISGGFDSSVSSYMLMRRGCRVHYCFFNLGGAAHEIGVRQVAHYLWNRFGSSHRVRFVAINFEPVVGEILEKVDDGQMGVVLKRMMVRAASKVAERYGVQALVTGEALGQVSSQTLTNLRLIDNVSDTLILRPLISYDKEHIINLARQIGTEDFARTMPEYCGVISKSPTVKAIKAKIEAEEENFDFSILDKVVEEANNVDIREIAQQTQQEVVEVETVSGFGANDVILDIRSVDEQDDKPLKVEGVDVVSLPFYKLSTKFGDLDQSKTWLLWCERGVMSRLQALYLREQGFANVKVYRP.

The region spanning 61-165 (LAIRDALTRI…DDRLLLIKGR (105 aa)) is the THUMP domain. ATP contacts are provided by residues 183-184 (LI), Lys-265, Gly-287, and Gln-296. An intrachain disulfide couples Cys-344 to Cys-456. Residues 404–482 (FGANDVILDI…GFANVKVYRP (79 aa)) enclose the Rhodanese domain. The active-site Cysteine persulfide intermediate is Cys-456.

The protein belongs to the ThiI family.

It localises to the cytoplasm. It catalyses the reaction [ThiI sulfur-carrier protein]-S-sulfanyl-L-cysteine + a uridine in tRNA + 2 reduced [2Fe-2S]-[ferredoxin] + ATP + H(+) = [ThiI sulfur-carrier protein]-L-cysteine + a 4-thiouridine in tRNA + 2 oxidized [2Fe-2S]-[ferredoxin] + AMP + diphosphate. The enzyme catalyses [ThiS sulfur-carrier protein]-C-terminal Gly-Gly-AMP + S-sulfanyl-L-cysteinyl-[cysteine desulfurase] + AH2 = [ThiS sulfur-carrier protein]-C-terminal-Gly-aminoethanethioate + L-cysteinyl-[cysteine desulfurase] + A + AMP + 2 H(+). It participates in cofactor biosynthesis; thiamine diphosphate biosynthesis. Catalyzes the ATP-dependent transfer of a sulfur to tRNA to produce 4-thiouridine in position 8 of tRNAs, which functions as a near-UV photosensor. Also catalyzes the transfer of sulfur to the sulfur carrier protein ThiS, forming ThiS-thiocarboxylate. This is a step in the synthesis of thiazole, in the thiamine biosynthesis pathway. The sulfur is donated as persulfide by IscS. The chain is tRNA sulfurtransferase from Salmonella typhi.